Reading from the N-terminus, the 422-residue chain is Tyrosine-protein kinase STYK1 (422 aa).

Residues 26–46 traverse the membrane as a helical segment; the sequence is VIIVPTLLVTIFLILLGVILW. Residues 114–384 enclose the Protein kinase domain; sequence SEVLEQICSG…ELRLRLEAAI (271 aa). ATP contacts are provided by residues 120–128 and lysine 147; that span reads ICSGSCGPI. Residue aspartate 251 is the Proton acceptor of the active site.

The protein belongs to the protein kinase superfamily. Tyr protein kinase family. As to expression, widely expressed. Highly expressed in brain, placenta and prostate. Expressed in tumor cells such as hepatoma cells L-02, cervix carcinoma cells HeLa, ovary cancer cells Ho8910 and chronic myelogenous leukemia cells K-562, but not in other tumor cells such as epidermoid carcinoma (A-431). Undetectable in most normal lung tissues, widely expressed in lung cancers.

It is found in the membrane. The catalysed reaction is L-tyrosyl-[protein] + ATP = O-phospho-L-tyrosyl-[protein] + ADP + H(+). Functionally, probable tyrosine protein-kinase, which has strong transforming capabilities on a variety of cell lines. When overexpressed, it can also induce tumor cell invasion as well as metastasis in distant organs. May act by activating both MAP kinase and phosphatidylinositol 3'-kinases (PI3K) pathways. The sequence is that of Tyrosine-protein kinase STYK1 (STYK1) from Homo sapiens (Human).